Reading from the N-terminus, the 178-residue chain is Large ribosomal subunit protein uL6 (178 aa).

The protein belongs to the universal ribosomal protein uL6 family. Part of the 50S ribosomal subunit.

Its function is as follows. This protein binds to the 23S rRNA, and is important in its secondary structure. It is located near the subunit interface in the base of the L7/L12 stalk, and near the tRNA binding site of the peptidyltransferase center. This Aliarcobacter butzleri (strain RM4018) (Arcobacter butzleri) protein is Large ribosomal subunit protein uL6.